Reading from the N-terminus, the 357-residue chain is DNA replication and repair protein RecF (357 aa).

ATP is bound at residue 30 to 37; it reads GANGSGKT.

Belongs to the RecF family.

The protein resides in the cytoplasm. Functionally, the RecF protein is involved in DNA metabolism; it is required for DNA replication and normal SOS inducibility. RecF binds preferentially to single-stranded, linear DNA. It also seems to bind ATP. In Cronobacter sakazakii (strain ATCC BAA-894) (Enterobacter sakazakii), this protein is DNA replication and repair protein RecF.